A 463-amino-acid polypeptide reads, in one-letter code: Fumarate hydratase class II (463 aa).

Substrate-binding positions include 98-100 (SGT), 129-132 (HPND), 139-141 (SSN), and T187. H188 functions as the Proton donor/acceptor in the catalytic mechanism. The active site involves S318. Substrate contacts are provided by residues S319 and 324-326 (KVN).

Belongs to the class-II fumarase/aspartase family. Fumarase subfamily. In terms of assembly, homotetramer.

The protein localises to the cytoplasm. The enzyme catalyses (S)-malate = fumarate + H2O. It participates in carbohydrate metabolism; tricarboxylic acid cycle; (S)-malate from fumarate: step 1/1. In terms of biological role, involved in the TCA cycle. Catalyzes the stereospecific interconversion of fumarate to L-malate. The polypeptide is Fumarate hydratase class II (Rickettsia bellii (strain RML369-C)).